Consider the following 200-residue polypeptide: Large ribosomal subunit protein uL4 (200 aa).

The tract at residues 42–65 (TRAQKTRSEVSGGGAKPWRQKGTG) is disordered.

Belongs to the universal ribosomal protein uL4 family. As to quaternary structure, part of the 50S ribosomal subunit.

One of the primary rRNA binding proteins, this protein initially binds near the 5'-end of the 23S rRNA. It is important during the early stages of 50S assembly. It makes multiple contacts with different domains of the 23S rRNA in the assembled 50S subunit and ribosome. In terms of biological role, forms part of the polypeptide exit tunnel. This chain is Large ribosomal subunit protein uL4, found in Vibrio campbellii (strain ATCC BAA-1116).